Here is a 34-residue protein sequence, read N- to C-terminus: Photosystem II reaction center protein M (34 aa).

Residues 5–25 (ILGLIATTLFILIPTSFLLIL) traverse the membrane as a helical segment.

The protein belongs to the PsbM family. PSII is composed of 1 copy each of membrane proteins PsbA, PsbB, PsbC, PsbD, PsbE, PsbF, PsbH, PsbI, PsbJ, PsbK, PsbL, PsbM, PsbT, PsbX, PsbY, PsbZ, Psb30/Ycf12, at least 3 peripheral proteins of the oxygen-evolving complex and a large number of cofactors. It forms dimeric complexes.

It is found in the plastid. The protein localises to the chloroplast thylakoid membrane. In terms of biological role, one of the components of the core complex of photosystem II (PSII). PSII is a light-driven water:plastoquinone oxidoreductase that uses light energy to abstract electrons from H(2)O, generating O(2) and a proton gradient subsequently used for ATP formation. It consists of a core antenna complex that captures photons, and an electron transfer chain that converts photonic excitation into a charge separation. This subunit is found at the monomer-monomer interface. The chain is Photosystem II reaction center protein M from Pleurastrum terricola (Filamentous green alga).